Here is a 585-residue protein sequence, read N- to C-terminus: Glutamate decarboxylase 2 (585 aa).

The segment covering 1–14 (MASPGSGFWSFGSE) has biased composition (low complexity). A disordered region spans residues 1-24 (MASPGSGFWSFGSEDGSGDSENPG). Phosphoserine is present on residues S3, S6, S10, and S13. Residues C30 and C45 are each lipidated (S-palmitoyl cysteine). 181-183 (QLS) is a substrate binding site. N6-(pyridoxal phosphate)lysine is present on K396. R558 provides a ligand contact to substrate.

Belongs to the group II decarboxylase family. As to quaternary structure, homodimer. Pyridoxal 5'-phosphate serves as cofactor. Post-translationally, phosphorylated; which does not affect kinetic parameters or subcellular location. In terms of processing, palmitoylated; which is required for presynaptic clustering.

It is found in the cytoplasm. The protein resides in the cytosol. Its subcellular location is the cytoplasmic vesicle. It localises to the presynaptic cell membrane. The protein localises to the golgi apparatus membrane. The enzyme catalyses L-glutamate + H(+) = 4-aminobutanoate + CO2. Catalyzes the production of GABA. In Homo sapiens (Human), this protein is Glutamate decarboxylase 2.